The sequence spans 651 residues: ATP-dependent RNA helicase MRH4, mitochondrial (651 aa).

The transit peptide at 1–61 (MLRSSLGSVC…SNARQATRRE (61 aa)) directs the protein to the mitochondrion. The segment covering 45–56 (SSLSFSTSNARQ) has biased composition (polar residues). The disordered stretch occupies residues 45–137 (SSLSFSTSNA…GGKKLGRDGK (93 aa)). Composition is skewed to basic and acidic residues over residues 72-83 (RVGRSTARDGDK) and 124-137 (NGRE…RDGK). Positions 167–200 (DSFDQFDLLPQVKDAVLNEALKGMLDIKPTPVQR) match the Q motif motif. The interval 210–241 (TTGARSRWRTKSKPADSGSEAASPDAPPPPRE) is disordered. A compositionally biased stretch (low complexity) spans 224–233 (ADSGSEAASP). Positions 234–445 (DAPPPPREEF…ASRFPNMRRI (212 aa)) constitute a Helicase ATP-binding domain. 247-254 (AETGSGKT) is an ATP binding site. A DEAD box motif is present at residues 392–395 (DEAD). The Helicase C-terminal domain occupies 494-651 (PVKGQVDVRR…ESMFMGQALV (158 aa)).

The protein belongs to the DEAD box helicase family. MRH4 subfamily.

It localises to the mitochondrion. The enzyme catalyses ATP + H2O = ADP + phosphate + H(+). In terms of biological role, ATP-binding RNA helicase involved in mitochondrial RNA metabolism. Required for maintenance of mitochondrial DNA. This chain is ATP-dependent RNA helicase MRH4, mitochondrial (MRH4), found in Pyricularia oryzae (strain 70-15 / ATCC MYA-4617 / FGSC 8958) (Rice blast fungus).